A 325-amino-acid chain; its full sequence is Beta-ketoacyl-[acyl-carrier-protein] synthase III (325 aa).

Residues cysteine 116 and histidine 252 contribute to the active site. The segment at 253–257 (QANLR) is ACP-binding. The active site involves asparagine 282.

The protein belongs to the thiolase-like superfamily. FabH family. Homodimer.

It localises to the cytoplasm. The enzyme catalyses malonyl-[ACP] + acetyl-CoA + H(+) = 3-oxobutanoyl-[ACP] + CO2 + CoA. It participates in lipid metabolism; fatty acid biosynthesis. Functionally, catalyzes the condensation reaction of fatty acid synthesis by the addition to an acyl acceptor of two carbons from malonyl-ACP. Catalyzes the first condensation reaction which initiates fatty acid synthesis and may therefore play a role in governing the total rate of fatty acid production. Possesses both acetoacetyl-ACP synthase and acetyl transacylase activities. Its substrate specificity determines the biosynthesis of branched-chain and/or straight-chain of fatty acids. The sequence is that of Beta-ketoacyl-[acyl-carrier-protein] synthase III from Xanthomonas axonopodis pv. citri (strain 306).